Reading from the N-terminus, the 110-residue chain is Insulin (110 aa).

An N-terminal signal peptide occupies residues 1 to 24 (MALWMRLLPLLALLALWGPDPAAA). 3 disulfides stabilise this stretch: Cys31/Cys96, Cys43/Cys109, and Cys95/Cys100. The propeptide at 57-87 (EAEDLQVGQVELGGGPGAGSLQPLALEGSLQ) is c peptide.

It belongs to the insulin family. Heterodimer of a B chain and an A chain linked by two disulfide bonds.

It is found in the secreted. Its function is as follows. Insulin decreases blood glucose concentration. It increases cell permeability to monosaccharides, amino acids and fatty acids. It accelerates glycolysis, the pentose phosphate cycle, and glycogen synthesis in liver. This Gorilla gorilla gorilla (Western lowland gorilla) protein is Insulin (INS).